A 352-amino-acid polypeptide reads, in one-letter code: MKQQTETEKKVVLLGMSLEELTTVALRMGMPRFAGKQLAEWIYVRRATDFAEMTNISQANRQKLAEIYDLGRYPWSDVQCSVDGTKKYLFPVGEGRFVESVLIPEGDRATLCISSQVGCKMDCLFCMTGKQGWNGNLSAAEILNQIFSVDEAAELTNLVYMGMGEPLDNTDEVLRSIEALTEPWGMGWSPKRITVSTIGAKGLERFLAESRCHLAVSLHSPFPEERRKLMPGEKAFPIMQTLDRIRAYDFSGQRRVSFEYIVFDGLNDDMRHADELAAILRGIPCRINLIRFHKIPAVSLRSSDTARMEAFRKRMESHGYTCTIRASRGEDIFAACGMLSTSKAESSEEKSS.

Residue glutamate 99 is the Proton acceptor of the active site. A Radical SAM core domain is found at 105–325 (EGDRATLCIS…ESHGYTCTIR (221 aa)). An intrachain disulfide couples cysteine 112 to cysteine 336. [4Fe-4S] cluster is bound by residues cysteine 119, cysteine 123, and cysteine 126. S-adenosyl-L-methionine contacts are provided by residues 164–165 (GE), serine 196, 217–219 (SLH), and histidine 293. Cysteine 336 serves as the catalytic S-methylcysteine intermediate.

This sequence belongs to the radical SAM superfamily. RlmN family. [4Fe-4S] cluster is required as a cofactor.

Its subcellular location is the cytoplasm. It catalyses the reaction adenosine(2503) in 23S rRNA + 2 reduced [2Fe-2S]-[ferredoxin] + 2 S-adenosyl-L-methionine = 2-methyladenosine(2503) in 23S rRNA + 5'-deoxyadenosine + L-methionine + 2 oxidized [2Fe-2S]-[ferredoxin] + S-adenosyl-L-homocysteine. The enzyme catalyses adenosine(37) in tRNA + 2 reduced [2Fe-2S]-[ferredoxin] + 2 S-adenosyl-L-methionine = 2-methyladenosine(37) in tRNA + 5'-deoxyadenosine + L-methionine + 2 oxidized [2Fe-2S]-[ferredoxin] + S-adenosyl-L-homocysteine. Functionally, specifically methylates position 2 of adenine 2503 in 23S rRNA and position 2 of adenine 37 in tRNAs. In Porphyromonas gingivalis (strain ATCC 33277 / DSM 20709 / CIP 103683 / JCM 12257 / NCTC 11834 / 2561), this protein is Probable dual-specificity RNA methyltransferase RlmN.